Consider the following 189-residue polypeptide: Recombination protein RecR (189 aa).

The segment at 48 to 63 (CQTCFHLSAEPLCDIC) adopts a C4-type zinc-finger fold. The Toprim domain maps to 71-165 (QLLCVVADSR…QVSRIAYGLP (95 aa)).

The protein belongs to the RecR family.

In terms of biological role, may play a role in DNA repair. It seems to be involved in an RecBC-independent recombinational process of DNA repair. It may act with RecF and RecO. This Prochlorococcus marinus (strain MIT 9313) protein is Recombination protein RecR.